A 326-amino-acid chain; its full sequence is Tumor necrosis factor soluble receptor (326 aa).

An N-terminal signal peptide occupies residues 1–16 (MFRLTLLLAYVACVYG). TNFR-Cys repeat units follow at residues 27–62 (KCRG…TVCS), 63–104 (PCKN…DRVC), 105–147 (DCSA…VLCT), and 148–186 (KCPR…TSCT). Cystine bridges form between C28–C39, C40–C53, C43–C61, C64–C79, C82–C96, C86–C104, C106–C120, C123–C146, C129–C149, and C164–C185. N66 is a glycosylation site (N-linked (GlcNAc...) asparagine; by host). 3 N-linked (GlcNAc...) asparagine; by host glycosylation sites follow: N181, N205, and N238.

Its function is as follows. Binds to TNF-alpha and beta. Probably prevents TNF to reach cellular target and thereby deampening the potential antiviral effects of the cytokine. This chain is Tumor necrosis factor soluble receptor, found in Oryctolagus cuniculus (Rabbit).